A 283-amino-acid chain; its full sequence is DNA repair protein RecO (283 aa).

The protein belongs to the RecO family.

In terms of biological role, involved in DNA repair and RecF pathway recombination. The polypeptide is DNA repair protein RecO (Gloeothece citriformis (strain PCC 7424) (Cyanothece sp. (strain PCC 7424))).